Here is a 194-residue protein sequence, read N- to C-terminus: ATP-dependent Clp protease proteolytic subunit (194 aa).

Catalysis depends on Ser-98, which acts as the Nucleophile. The active site involves His-123.

The protein belongs to the peptidase S14 family. As to quaternary structure, fourteen ClpP subunits assemble into 2 heptameric rings which stack back to back to give a disk-like structure with a central cavity, resembling the structure of eukaryotic proteasomes.

The protein localises to the cytoplasm. It carries out the reaction Hydrolysis of proteins to small peptides in the presence of ATP and magnesium. alpha-casein is the usual test substrate. In the absence of ATP, only oligopeptides shorter than five residues are hydrolyzed (such as succinyl-Leu-Tyr-|-NHMec, and Leu-Tyr-Leu-|-Tyr-Trp, in which cleavage of the -Tyr-|-Leu- and -Tyr-|-Trp bonds also occurs).. Its function is as follows. Cleaves peptides in various proteins in a process that requires ATP hydrolysis. Has a chymotrypsin-like activity. Plays a major role in the degradation of misfolded proteins. The protein is ATP-dependent Clp protease proteolytic subunit of Ruminiclostridium cellulolyticum (strain ATCC 35319 / DSM 5812 / JCM 6584 / H10) (Clostridium cellulolyticum).